The following is a 200-amino-acid chain: Cell division protein SepF (200 aa).

Disordered stretches follow at residues 35-60 (NLYQ…RWRE) and 170-200 (LHEV…RMAQ). Polar residues predominate over residues 183–200 (PTGSPNQTWGNETNRMAQ).

It belongs to the SepF family. Homodimer. Interacts with FtsZ.

It localises to the cytoplasm. Its function is as follows. Cell division protein that is part of the divisome complex and is recruited early to the Z-ring. Probably stimulates Z-ring formation, perhaps through the cross-linking of FtsZ protofilaments. Its function overlaps with FtsA. The chain is Cell division protein SepF from Nostoc punctiforme (strain ATCC 29133 / PCC 73102).